A 269-amino-acid chain; its full sequence is Tryptophan synthase alpha chain (269 aa).

Active-site proton acceptor residues include E49 and D60.

The protein belongs to the TrpA family. In terms of assembly, tetramer of two alpha and two beta chains.

The catalysed reaction is (1S,2R)-1-C-(indol-3-yl)glycerol 3-phosphate + L-serine = D-glyceraldehyde 3-phosphate + L-tryptophan + H2O. It participates in amino-acid biosynthesis; L-tryptophan biosynthesis; L-tryptophan from chorismate: step 5/5. The alpha subunit is responsible for the aldol cleavage of indoleglycerol phosphate to indole and glyceraldehyde 3-phosphate. This Azotobacter vinelandii (strain DJ / ATCC BAA-1303) protein is Tryptophan synthase alpha chain.